The primary structure comprises 145 residues: Hemoglobin subunit beta (145 aa).

A Globin domain is found at 1–145 (MLTSEEKAAV…VANALAHRYH (145 aa)). A Phosphothreonine modification is found at threonine 11. Lysine 58 carries the post-translational modification N6-acetyllysine. A heme b-binding site is contributed by histidine 62. Residue lysine 81 is modified to N6-acetyllysine. A heme b-binding site is contributed by histidine 91. Cysteine 92 carries the post-translational modification S-nitrosocysteine.

This sequence belongs to the globin family. Heterotetramer of two alpha chains and two beta chains. In terms of tissue distribution, red blood cells.

Functionally, involved in oxygen transport from the lung to the various peripheral tissues. The sequence is that of Hemoglobin subunit beta (HBB) from Rangifer tarandus (Reindeer).